The chain runs to 100 residues: Small ribosomal subunit protein uS14c (100 aa).

It belongs to the universal ribosomal protein uS14 family. In terms of assembly, part of the 30S ribosomal subunit.

The protein localises to the plastid. Functionally, binds 16S rRNA, required for the assembly of 30S particles. The sequence is that of Small ribosomal subunit protein uS14c from Euglena longa (Euglenophycean alga).